Consider the following 185-residue polypeptide: Urease accessory protein UreE (185 aa).

The disordered stretch occupies residues 153–185 (LRANSAQGHGHSHSHSHDHHGYHHHGDGHWHKH). Positions 162–175 (GHSHSHSHDHHGYH) are enriched in basic residues. A compositionally biased stretch (basic and acidic residues) spans 176–185 (HHGDGHWHKH).

This sequence belongs to the UreE family.

The protein resides in the cytoplasm. In terms of biological role, involved in urease metallocenter assembly. Binds nickel. Probably functions as a nickel donor during metallocenter assembly. In Haemophilus influenzae (strain PittEE), this protein is Urease accessory protein UreE.